Here is a 432-residue protein sequence, read N- to C-terminus: Septin-14 (432 aa).

Residues 49 to 315 (QGFTFNILCV…ECYRYQKLQK (267 aa)) form the Septin-type G domain. Positions 59–66 (GETGIGKS) are G1 motif. Residues 59-66 (GETGIGKS), Gly-114, 195-203 (KADTISKND), Gly-249, and Arg-264 each bind GTP. Residues 111–114 (ETVG) are G3 motif. Residues 194 to 197 (AKAD) are G4 motif. Residues 332-412 (EIFEAKRQEF…IIDFYKMKAA (81 aa)) adopt a coiled-coil conformation. The required for interaction with SEPTIN4. Required for migration of cortical neurons during corticogenesis stretch occupies residues 369-432 (EAEKELQDKF…DTKKDKHRKK (64 aa)).

It belongs to the TRAFAC class TrmE-Era-EngA-EngB-Septin-like GTPase superfamily. Septin GTPase family. As to quaternary structure, septins polymerize into heterooligomeric protein complexes that form filaments, and can associate with cellular membranes, actin filaments and microtubules. GTPase activity is required for filament formation. Interacts with ACTN4. Interacts with SEPTIN9. Interacts (via C-terminus) with SEPTIN4. In terms of tissue distribution, testis-specific (at protein level).

It is found in the cytoplasm. It localises to the cytoskeleton. The protein resides in the cell projection. The protein localises to the axon. Its subcellular location is the dendrite. It is found in the perikaryon. It localises to the perinuclear region. The protein resides in the cytoplasmic vesicle. The protein localises to the secretory vesicle. Its subcellular location is the acrosome. Filament-forming cytoskeletal GTPase. Involved in the migration of cortical neurons and the formation of neuron leading processes during embryonic development. Plays a role in sperm head formation during spermiogenesis, potentially via facilitating localization of ACTN4 to cell filaments. This Homo sapiens (Human) protein is Septin-14.